Reading from the N-terminus, the 156-residue chain is Ribonuclease H (156 aa).

Residues 1-142 (MGKQVEIFTD…CDELARAAAN (142 aa)) enclose the RNase H type-1 domain. Aspartate 10, glutamate 48, aspartate 70, and aspartate 134 together coordinate Mg(2+).

This sequence belongs to the RNase H family. In terms of assembly, monomer. Mg(2+) serves as cofactor.

Its subcellular location is the cytoplasm. The enzyme catalyses Endonucleolytic cleavage to 5'-phosphomonoester.. Functionally, endonuclease that specifically degrades the RNA of RNA-DNA hybrids. The polypeptide is Ribonuclease H (Photorhabdus laumondii subsp. laumondii (strain DSM 15139 / CIP 105565 / TT01) (Photorhabdus luminescens subsp. laumondii)).